We begin with the raw amino-acid sequence, 739 residues long: UPF0313 protein YgiQ (739 aa).

Residues 372 to 650 form the Radical SAM core domain; the sequence is AYEMIRFSVN…KALLRYHDPA (279 aa). 3 residues coordinate [4Fe-4S] cluster: Cys-386, Cys-390, and Cys-393. The segment at 685–739 is disordered; sequence REARRQNRNTRPALTKHTPMATQRQTPATAKKASSTQSRPVNAGAKKRPKAAVGR. The span at 704–724 shows a compositional bias: polar residues; the sequence is MATQRQTPATAKKASSTQSRP. Basic residues predominate over residues 729-739; it reads AKKRPKAAVGR.

Belongs to the UPF0313 family. [4Fe-4S] cluster serves as cofactor.

This is UPF0313 protein YgiQ from Shigella flexneri.